Reading from the N-terminus, the 153-residue chain is UPF0756 membrane protein LSEI_1366 (153 aa).

4 helical membrane passes run 4 to 24, 52 to 72, 85 to 105, and 115 to 135; these read WLFL…SLII, WGVT…EIGF, WIAI…VGLL, and LVFG…GPVI.

This sequence belongs to the UPF0756 family.

It localises to the cell membrane. The polypeptide is UPF0756 membrane protein LSEI_1366 (Lacticaseibacillus paracasei (strain ATCC 334 / BCRC 17002 / CCUG 31169 / CIP 107868 / KCTC 3260 / NRRL B-441) (Lactobacillus paracasei)).